The sequence spans 144 residues: Hemoglobin subunit alpha-1 (144 aa).

S1 carries the N-acetylserine modification. The 144-residue stretch at 1–144 (SLTAKDKSVV…VSAALADKYR (144 aa)) folds into the Globin domain. H61 contacts O2. H90 is a heme b binding site.

It belongs to the globin family. As to quaternary structure, heterotetramer of two alpha chains and two beta chains. As to expression, red blood cells.

Involved in oxygen transport from gills to the various peripheral tissues. This Oncorhynchus mykiss (Rainbow trout) protein is Hemoglobin subunit alpha-1 (hba1).